Consider the following 201-residue polypeptide: Dermatopontin (201 aa).

The signal sequence occupies residues 1–18 (MDLTLLWVLLPLVTVAWG). Pyrrolidone carboxylic acid is present on Gln19. The residue at position 23 (Tyr23) is a Sulfotyrosine. Tandem repeats lie at residues 26–79 (SYHQ…ACMP), 70–75 (DRQWNY), 80–135 (TPQS…CCRY), and 125–130 (DREWQF). The interval 26–135 (SYHQYHDYSD…REWQFYCCRY (110 aa)) is 2 X 53-55 AA tandem repeats. 5 disulfides stabilise this stretch: Cys50–Cys77, Cys90–Cys132, Cys106–Cys133, Cys139–Cys196, and Cys143–Cys189. Positions 70 to 186 (DRQWNYACMP…AVERDRQWKF (117 aa)) are 3 X 6 AA tandem repeats of D-R-[EQ]-W-[NQK]-[FY]. 4 positions are modified to sulfotyrosine: Tyr162, Tyr164, Tyr166, and Tyr167. The stretch at 181–186 (DRQWKF) is one 2-3 repeat. At Tyr194 the chain carries Sulfotyrosine.

This sequence belongs to the dermatopontin family. As to quaternary structure, interacts with TGFB1, DCN and collagen. Sulfated on tyrosine residue(s). In terms of tissue distribution, expressed in skeletal muscle, heart, pancreas, skin and cultured fibroblasts.

Its subcellular location is the secreted. It localises to the extracellular space. It is found in the extracellular matrix. In terms of biological role, seems to mediate adhesion by cell surface integrin binding. May serve as a communication link between the dermal fibroblast cell surface and its extracellular matrix environment. Enhances TGFB1 activity. Inhibits cell proliferation. Accelerates collagen fibril formation, and stabilizes collagen fibrils against low-temperature dissociation. In Bos taurus (Bovine), this protein is Dermatopontin (DPT).